The primary structure comprises 812 residues: Probable inorganic carbon transporter subunit DabA (812 aa).

Residues C337, D339, H499, and C514 each coordinate Zn(2+).

This sequence belongs to the inorganic carbon transporter (TC 9.A.2) DabA family. As to quaternary structure, forms a complex with DabB. Zn(2+) serves as cofactor.

Its subcellular location is the cell inner membrane. Part of an energy-coupled inorganic carbon pump. The polypeptide is Probable inorganic carbon transporter subunit DabA (Xanthomonas oryzae pv. oryzae (strain MAFF 311018)).